We begin with the raw amino-acid sequence, 425 residues long: Probable mitochondrial import inner membrane translocase subunit tin-44 (425 aa).

Residues 38-149 (FLNNLIDNVR…EHVEKVAEKV (112 aa)) are a coiled coil.

Belongs to the Tim44 family. Probable component of the PAM complex at least composed of a mitochondrial HSP70 protein, GrpE, tin-44, tim-16 and tim-14/dnj-21. The complex interacts with the tim-23 component of the TIM23 complex.

It localises to the mitochondrion inner membrane. Essential component of the PAM complex, a complex required for the translocation of transit peptide-containing proteins from the inner membrane into the mitochondrial matrix in an ATP-dependent manner. Recruits mitochondrial HSP70 to drive protein translocation into the matrix using ATP as an energy source. In Caenorhabditis elegans, this protein is Probable mitochondrial import inner membrane translocase subunit tin-44.